The sequence spans 338 residues: UDP-glucose 4-epimerase (338 aa).

Residues 11–12, 31–36, 58–59, 80–84, N99, S124, Y149, K153, and F178 contribute to the NAD(+) site; these read YI, DNLCNS, DI, and FAGLK. S124 and Y149 together coordinate substrate. Y149 acts as the Proton acceptor in catalysis. Residues N179, 199–200, 216–218, R231, and 292–295 each bind substrate; these read NL, SVF, and RSGD.

The protein belongs to the NAD(P)-dependent epimerase/dehydratase family. Homodimer. NAD(+) serves as cofactor.

The enzyme catalyses UDP-alpha-D-glucose = UDP-alpha-D-galactose. It participates in carbohydrate metabolism; galactose metabolism. Involved in the metabolism of galactose. Catalyzes the conversion of UDP-galactose (UDP-Gal) to UDP-glucose (UDP-Glc) through a mechanism involving the transient reduction of NAD. By controlling the internal galactose concentration, it may be linked to the biosynthesis of lipopolysaccharide surface molecules, which are important for the pathogenesis of H.influenzae. The protein is UDP-glucose 4-epimerase (galE) of Haemophilus influenzae (strain ATCC 51907 / DSM 11121 / KW20 / Rd).